Reading from the N-terminus, the 198-residue chain is MSVKIENIQCELLSKNWFKLHKYTFDLKTDEGTSVQQIREVYDRGNGATILLYNRQQGTVVLIEQFRMPTYVNGNASGMLLEACAGLLDNDSPEACIRREAMEETGYQVDKVQKLFEAYMSPGGVTELVYFFAAEYHPDQKITDEVGVEDEVIEVVELPFHDALAMVADGRIKDGKTIMLLQYAQIHFFPSSLTPQRC.

Residues 38–40 (IRE), Arg-67, and 85–87 (AGL) each bind GDP-alpha-D-mannose. In terms of domain architecture, Nudix hydrolase spans 43–180 (DRGNGATILL…RIKDGKTIML (138 aa)). Mg(2+) is bound by residues Ala-85, Glu-100, and Glu-104. A Nudix box motif is present at residues 86 to 106 (GLLDNDSPEACIRREAMEETG). Residues Glu-104, Glu-127, 150-151 (DE), and Lys-176 contribute to the GDP-alpha-D-mannose site. Glu-151 provides a ligand contact to Mg(2+).

This sequence belongs to the Nudix hydrolase family. NudK subfamily. In terms of assembly, homodimer. The cofactor is Mg(2+).

It catalyses the reaction GDP-alpha-D-mannose + H2O = alpha-D-mannose 1-phosphate + GMP + 2 H(+). In terms of biological role, nucleoside diphosphate sugar hydrolase that hydrolyzes GDP-mannose as its preferred substrate, yielding GMP and mannose-1-phosphate. The sequence is that of GDP-mannose pyrophosphatase (nudK) from Yersinia pseudotuberculosis serotype O:1b (strain IP 31758).